Here is a 446-residue protein sequence, read N- to C-terminus: Exodeoxyribonuclease 7 large subunit (446 aa).

The protein belongs to the XseA family. In terms of assembly, heterooligomer composed of large and small subunits.

Its subcellular location is the cytoplasm. It carries out the reaction Exonucleolytic cleavage in either 5'- to 3'- or 3'- to 5'-direction to yield nucleoside 5'-phosphates.. In terms of biological role, bidirectionally degrades single-stranded DNA into large acid-insoluble oligonucleotides, which are then degraded further into small acid-soluble oligonucleotides. The protein is Exodeoxyribonuclease 7 large subunit of Streptococcus pneumoniae (strain ATCC BAA-255 / R6).